The chain runs to 460 residues: Bifunctional protein GlmU (460 aa).

The interval 1–237 is pyrophosphorylase; it reads MSSNQYTAGA…DPDLLGVNTP (237 aa). UDP-N-acetyl-alpha-D-glucosamine contacts are provided by residues 13–16, Lys-27, Gln-78, and 83–84; these read LAAG and GT. A Mg(2+)-binding site is contributed by Asp-109. UDP-N-acetyl-alpha-D-glucosamine-binding residues include Gly-146, Glu-160, Asn-177, and Asn-235. Position 235 (Asn-235) interacts with Mg(2+). Positions 238-258 are linker; it reads AELMRSEELLRENIVTRHLHN. The segment at 259 to 460 is N-acetyltransferase; the sequence is GVHVHAAGSV…QKNLRKTRHS (202 aa). UDP-N-acetyl-alpha-D-glucosamine-binding residues include Arg-341 and Lys-359. His-371 serves as the catalytic Proton acceptor. Residues Tyr-374 and Asn-385 each contribute to the UDP-N-acetyl-alpha-D-glucosamine site. Residues Ala-388, 394 to 395, Ser-413, Ala-431, and Arg-448 each bind acetyl-CoA; that span reads NY.

In the N-terminal section; belongs to the N-acetylglucosamine-1-phosphate uridyltransferase family. It in the C-terminal section; belongs to the transferase hexapeptide repeat family. Homotrimer. Mg(2+) serves as cofactor.

The protein localises to the cytoplasm. It catalyses the reaction alpha-D-glucosamine 1-phosphate + acetyl-CoA = N-acetyl-alpha-D-glucosamine 1-phosphate + CoA + H(+). It carries out the reaction N-acetyl-alpha-D-glucosamine 1-phosphate + UTP + H(+) = UDP-N-acetyl-alpha-D-glucosamine + diphosphate. It functions in the pathway nucleotide-sugar biosynthesis; UDP-N-acetyl-alpha-D-glucosamine biosynthesis; N-acetyl-alpha-D-glucosamine 1-phosphate from alpha-D-glucosamine 6-phosphate (route II): step 2/2. Its pathway is nucleotide-sugar biosynthesis; UDP-N-acetyl-alpha-D-glucosamine biosynthesis; UDP-N-acetyl-alpha-D-glucosamine from N-acetyl-alpha-D-glucosamine 1-phosphate: step 1/1. The protein operates within bacterial outer membrane biogenesis; LPS lipid A biosynthesis. Its function is as follows. Catalyzes the last two sequential reactions in the de novo biosynthetic pathway for UDP-N-acetylglucosamine (UDP-GlcNAc). The C-terminal domain catalyzes the transfer of acetyl group from acetyl coenzyme A to glucosamine-1-phosphate (GlcN-1-P) to produce N-acetylglucosamine-1-phosphate (GlcNAc-1-P), which is converted into UDP-GlcNAc by the transfer of uridine 5-monophosphate (from uridine 5-triphosphate), a reaction catalyzed by the N-terminal domain. This is Bifunctional protein GlmU from Oleidesulfovibrio alaskensis (strain ATCC BAA-1058 / DSM 17464 / G20) (Desulfovibrio alaskensis).